A 368-amino-acid polypeptide reads, in one-letter code: H-2 class I histocompatibility antigen, D-P alpha chain (368 aa).

Residues 1-21 (MAPRTLLLLLAAALAPTQTRA) form the signal peptide. The alpha-1 stretch occupies residues 22-111 (GPHSLRYFVT…LLGYYNQSKG (90 aa)). Topologically, residues 22 to 303 (GPHSLRYFVT…RWEPPPSTDS (282 aa)) are extracellular. Residue Asn-107 is glycosylated (N-linked (GlcNAc...) asparagine). Positions 112–203 (GSHTIQGMRG…ELGNATLLCT (92 aa)) are alpha-2. An intrachain disulfide couples Cys-122 to Cys-185. Residues Asn-197 and Asn-277 are each glycosylated (N-linked (GlcNAc...) asparagine). Residues 204–295 (DPPKAHVTHH…GLPEPLTLRW (92 aa)) are alpha-3. An Ig-like C1-type domain is found at 206-294 (PKAHVTHHPR…EGLPEPLTLR (89 aa)). A disulfide bridge links Cys-224 with Cys-280. Residues 296–303 (EPPPSTDS) are connecting peptide. The chain crosses the membrane as a helical span at residues 304 to 330 (YMVIVAVLVVLGAVFIIGAVVAFVMMM). The Cytoplasmic portion of the chain corresponds to 331-368 (RRNTGGKGGDYTLAPGSQSSEMSLRDCKVMVHDSHSLA). Ser-350 and Ser-353 each carry phosphoserine.

Belongs to the MHC class I family. Heterodimer of an alpha chain and a beta chain (beta-2-microglobulin).

Its subcellular location is the membrane. Its function is as follows. Involved in the presentation of foreign antigens to the immune system. This is H-2 class I histocompatibility antigen, D-P alpha chain (H2-D1) from Mus musculus (Mouse).